Reading from the N-terminus, the 204-residue chain is uncharacterized protein (204 aa).

An N-terminal signal peptide occupies residues 1–16 (MKYTFLAVLSAVTVLA).

It is found in the secreted. This is an uncharacterized protein from Arthroderma benhamiae (strain ATCC MYA-4681 / CBS 112371) (Trichophyton mentagrophytes).